The primary structure comprises 845 residues: Beta-galactosidase 11 (845 aa).

The first 26 residues, 1 to 26 (MRKHSLDRWLLTAVLVVLLSSSSSFA), serve as a signal peptide directing secretion. Asn104 carries an N-linked (GlcNAc...) asparagine glycan. The Proton donor role is filled by Glu197. The Nucleophile role is filled by Glu268. N-linked (GlcNAc...) asparagine glycans are attached at residues Asn269, Asn300, Asn395, Asn752, Asn784, and Asn814. An SUEL-type lectin domain is found at 751–840 (DNVSLTATLK…KMLAVQVKCG (90 aa)).

Belongs to the glycosyl hydrolase 35 family.

Its subcellular location is the secreted. The protein localises to the extracellular space. It localises to the apoplast. It carries out the reaction Hydrolysis of terminal non-reducing beta-D-galactose residues in beta-D-galactosides.. The chain is Beta-galactosidase 11 (BGAL11) from Arabidopsis thaliana (Mouse-ear cress).